Consider the following 284-residue polypeptide: L-ribulose-5-phosphate 3-epimerase UlaE (284 aa).

Belongs to the L-ribulose-5-phosphate 3-epimerase family.

It catalyses the reaction L-ribulose 5-phosphate = L-xylulose 5-phosphate. It participates in cofactor degradation; L-ascorbate degradation; D-xylulose 5-phosphate from L-ascorbate: step 3/4. Functionally, catalyzes the isomerization of L-xylulose-5-phosphate to L-ribulose-5-phosphate. Is involved in the anaerobic L-ascorbate utilization. The polypeptide is L-ribulose-5-phosphate 3-epimerase UlaE (Salmonella paratyphi A (strain AKU_12601)).